Here is a 332-residue protein sequence, read N- to C-terminus: Cinnamoyl-CoA reductase 2 (332 aa).

NADP(+)-binding positions include 12 to 18 (GAGGYIA), R37, K43, 63 to 64 (DL), 83 to 85 (TAS), Y156, K160, 183 to 186 (PVLV), and S198. C149 and C157 are oxidised to a cystine. Residue K160 is the Proton donor of the active site.

It belongs to the NAD(P)-dependent epimerase/dehydratase family. Dihydroflavonol-4-reductase subfamily. As to expression, expressed at low levels in leaves, stems and flowers.

The enzyme catalyses (E)-cinnamaldehyde + NADP(+) + CoA = (E)-cinnamoyl-CoA + NADPH + H(+). It functions in the pathway aromatic compound metabolism; phenylpropanoid biosynthesis. Cinnamoyl-CoA reductase probably involved in the formation of phenolic compounds associated with the hypersensitive response. Seems not to be involved in lignin biosynthesis. This Arabidopsis thaliana (Mouse-ear cress) protein is Cinnamoyl-CoA reductase 2 (CCR2).